A 292-amino-acid polypeptide reads, in one-letter code: Elongation factor Ts (292 aa).

The interval 80–83 (TDFV) is involved in Mg(2+) ion dislocation from EF-Tu.

Belongs to the EF-Ts family.

The protein localises to the cytoplasm. Its function is as follows. Associates with the EF-Tu.GDP complex and induces the exchange of GDP to GTP. It remains bound to the aminoacyl-tRNA.EF-Tu.GTP complex up to the GTP hydrolysis stage on the ribosome. This Cupriavidus metallidurans (strain ATCC 43123 / DSM 2839 / NBRC 102507 / CH34) (Ralstonia metallidurans) protein is Elongation factor Ts.